Consider the following 199-residue polypeptide: dTTP/UTP pyrophosphatase (199 aa).

D76 serves as the catalytic Proton acceptor.

The protein belongs to the Maf family. YhdE subfamily. A divalent metal cation serves as cofactor.

The protein resides in the cytoplasm. It catalyses the reaction dTTP + H2O = dTMP + diphosphate + H(+). The catalysed reaction is UTP + H2O = UMP + diphosphate + H(+). Nucleoside triphosphate pyrophosphatase that hydrolyzes dTTP and UTP. May have a dual role in cell division arrest and in preventing the incorporation of modified nucleotides into cellular nucleic acids. This is dTTP/UTP pyrophosphatase from Chlorobaculum parvum (strain DSM 263 / NCIMB 8327) (Chlorobium vibrioforme subsp. thiosulfatophilum).